A 344-amino-acid chain; its full sequence is 3,4-dihydroxy-2-butanone 4-phosphate synthase (344 aa).

The tract at residues 1-202 is DHBP synthase; the sequence is MILKRVTEAL…VSDLISYRLE (202 aa). D-ribulose 5-phosphate-binding positions include 27 to 28, Asp-32, 139 to 143, and Glu-163; these read RE and RTGHT. Mg(2+) is bound at residue Glu-28. His-142 lines the Mg(2+) pocket. Positions 203 to 344 are GTP cyclohydrolase II-like; it reads NESLLKMFCQ…GLKLVETISL (142 aa).

This sequence in the N-terminal section; belongs to the DHBP synthase family. In the C-terminal section; belongs to the GTP cyclohydrolase II family. It depends on Mg(2+) as a cofactor. The cofactor is Mn(2+).

The catalysed reaction is D-ribulose 5-phosphate = (2S)-2-hydroxy-3-oxobutyl phosphate + formate + H(+). The protein operates within cofactor biosynthesis; riboflavin biosynthesis; 2-hydroxy-3-oxobutyl phosphate from D-ribulose 5-phosphate: step 1/1. Its function is as follows. Catalyzes the conversion of D-ribulose 5-phosphate to formate and 3,4-dihydroxy-2-butanone 4-phosphate. The polypeptide is 3,4-dihydroxy-2-butanone 4-phosphate synthase (ribB) (Helicobacter pylori (strain ATCC 700392 / 26695) (Campylobacter pylori)).